The primary structure comprises 4239 residues: Tenellin synthetase (4239 aa).

In terms of domain architecture, Ketosynthase family 3 (KS3) spans 15–454 (SEPIAIIGSA…GTNAHAIIER (440 aa)). Catalysis depends on for beta-ketoacyl synthase activity residues cysteine 189, histidine 326, and histidine 374. The segment at 589–923 (VFTGQGAQWP…ANDAVAFSTA (335 aa)) is malonyl-CoA:ACP transacylase (MAT) domain. The segment at 993–1135 (HELLGRRTPD…GRIAVQLGAK (143 aa)) is N-terminal hotdog fold. The dehydratase (DH) domain stretch occupies residues 993–1310 (HELLGRRTPD…GFEVRAVGEP (318 aa)). The PKS/mFAS DH domain maps to 993–1313 (HELLGRRTPD…VRAVGEPDAS (321 aa)). The active-site Proton acceptor; for dehydratase activity is the histidine 1025. The interval 1158–1313 (LQQLDCEKLY…VRAVGEPDAS (156 aa)) is C-terminal hotdog fold. The active-site Proton donor; for dehydratase activity is the aspartate 1217. Residues 1459-1652 (RLYTEDKGMH…FSGVDHIVHD (194 aa)) form a methyltransferase (MT) domain region. Positions 2209 to 2382 (TYLMVGAAGG…AASIIHVGHV (174 aa)) are ketoreductase (KR) domain. The Carrier 1 domain maps to 2502 to 2582 (EAAVAALKGF…QLSALAAKLA (81 aa)). Position 2542 is an O-(pantetheine 4'-phosphoryl)serine (serine 2542). 2 disordered regions span residues 2587–2629 (KKRA…EIAQ) and 2642–2712 (LEAS…FFTQ). Composition is skewed to polar residues over residues 2648 to 2662 (GGSS…SSVS) and 2670 to 2681 (ESTLQSSDNNGE). Residues 2682 to 2698 (STPSKSSNCNSDSGSDN) are compositionally biased toward low complexity. Positions 2723–3169 (REAPMSPAQS…SAQSVGDCVV (447 aa)) are condensation (C) domain. The segment at 3203–3614 (CQQHSTKSAI…DGTLLCFGRI (412 aa)) is adenylation (A) (KR) domain. The segment at 3728–3752 (EAAAATSPSNNNINNNTPSGGGGEK) is disordered. Residues 3729 to 3745 (AAAATSPSNNNINNNTP) show a composition bias toward low complexity. The Carrier 2 domain occupies 3751 to 3835 (EKMTVRQGEL…GMARCVAEQR (85 aa)). Serine 3795 carries the post-translational modification O-(pantetheine 4'-phosphoryl)serine. A disordered region spans residues 3862 to 3892 (EKLQHSSASSSSSSSSSSSAGSSSTQRPRKT). Over residues 3867-3885 (SSASSSSSSSSSSSAGSSS) the composition is skewed to low complexity. The interval 3899–4145 (LTGATGFLGG…LDFGQVDKVV (247 aa)) is reductase (RED) domain.

In the C-terminal section; belongs to the NRP synthetase family.

Its pathway is secondary metabolite biosynthesis. Functionally, hybrid PKS-NRPS synthetase; part of the gene cluster that mediates the biosynthesis of tenellin-type 2-pyridones, iron-chelating compounds involved in iron stress tolerance, competition with the natural competitor fungus Metarhizium robertsii and insect hosts infection. TenS catalyzes the assembly of the polyketide-amino acid backbone. Because tenS lacks a designated enoylreductase (ER) domain, the required activity is provided the enoyl reductase tenC. Upon formation of the polyketide backbone on the thiotemplate, the triketide is transferred to the NRPS module and linked to tyrosine to produce the pyrrolidine-2-dione intermediates, including pretellinin A, 11-hydropretellenin A, 12-hydropretellenin A, 13-hydropretellenin A, 14-hydropretellenin A, 12-oxopretellenin A and prototellinin D. The pathway begins with the assembly of the polyketide-amino acid backbone by the hybrid PKS-NRPS tenS with the help of the enoyl reductase tenC. These enzymes catalyze the synthesis of the pyrrolidine-2-dione intermediates pretellinin A, 11-hydropretellenin A, 12-hydropretellenin A, 13-hydropretellenin A, 14-hydropretellenin A, 12-oxopretellenin A and prototellinin D. The cytochrome P450 monooxygenase tenA then catalyzes an oxidative ring expansion of pretenellin A and 14-hydropretellenin A to form the 2-pyridone core, leading to pretenellin B and pyridovericin, respectively. The cytochrome P450 monooxygenase tenB is then required for the selective N-hydroxylation of the 2-pyridone nitrogen of yield tellinin and 15-hydroxytellenin (15-HT), respectively. The UDP-glucosyltransferase GT1 and the methyltransferase MT1, located outside the tenS gene cluster, contribute to the stepwise glycosylation and methylation of 15-HT to obtain the glycoside pyridovericin-N-O-(4-O-methyl-beta-D-glucopyranoside) (PMGP). Additional related compounds such as 1-O-methyl-15-HT, (8Z)-1-O-methyl-15-HT, and O-methyltenellin A are also produced but the enzymes involved in their biosynthesis have still to be determined. In Beauveria bassiana (White muscardine disease fungus), this protein is Tenellin synthetase.